Reading from the N-terminus, the 391-residue chain is Digeranylgeranylglycerophospholipid reductase (391 aa).

Gly-13, Glu-32, Cys-43, Ala-44, Gly-46, Arg-97, Ala-121, Asp-277, Gly-289, and Ile-290 together coordinate FAD.

The protein belongs to the geranylgeranyl reductase family. DGGGPL reductase subfamily. FAD is required as a cofactor.

The catalysed reaction is a 2,3-bis-O-phytanyl-sn-glycerol 1-phospholipid + 8 oxidized 2[4Fe-4S]-[ferredoxin] = a 2,3-bis-O-(geranylgeranyl)-sn-glycerol 1-phospholipid + 8 reduced 2[4Fe-4S]-[ferredoxin] + 16 H(+). It catalyses the reaction 2,3-bis-O-(phytanyl)-sn-glycerol 1-phosphate + 8 oxidized 2[4Fe-4S]-[ferredoxin] = 2,3-bis-O-(geranylgeranyl)-sn-glycerol 1-phosphate + 8 reduced 2[4Fe-4S]-[ferredoxin] + 16 H(+). It carries out the reaction a 2,3-bis-O-phytanyl-sn-glycerol 1-phospholipid + 8 A = a 2,3-bis-O-(geranylgeranyl)-sn-glycerol 1-phospholipid + 8 AH2. The enzyme catalyses CDP-2,3-bis-O-(geranylgeranyl)-sn-glycerol + 8 AH2 = CDP-2,3-bis-O-(phytanyl)-sn-glycerol + 8 A. The catalysed reaction is archaetidylserine + 8 AH2 = 2,3-bis-O-phytanyl-sn-glycero-3-phospho-L-serine + 8 A. The protein operates within membrane lipid metabolism; glycerophospholipid metabolism. Its function is as follows. Is involved in the reduction of 2,3-digeranylgeranylglycerophospholipids (unsaturated archaeols) into 2,3-diphytanylglycerophospholipids (saturated archaeols) in the biosynthesis of archaeal membrane lipids. Catalyzes the formation of archaetidic acid (2,3-di-O-phytanyl-sn-glyceryl phosphate) from 2,3-di-O-geranylgeranylglyceryl phosphate (DGGGP) via the hydrogenation of each double bond of the isoprenoid chains. Is also probably able to reduce double bonds of geranyl groups in CDP-2,3-bis-O-(geranylgeranyl)-sn-glycerol and archaetidylserine, thus acting at various stages in the biosynthesis of archaeal membrane lipids. The sequence is that of Digeranylgeranylglycerophospholipid reductase from Methanothrix thermoacetophila (strain DSM 6194 / JCM 14653 / NBRC 101360 / PT) (Methanosaeta thermophila).